Here is a 599-residue protein sequence, read N- to C-terminus: UvrABC system protein C (599 aa).

The region spanning 19–95 (ESTGVYIFYD…IKKYRPIMNV (77 aa)) is the GIY-YIG domain. One can recognise a UVR domain in the interval 206–241 (EEIIEKLYDQMQEYSKNLEFEKAAKIRDKIRLLQNL).

The protein belongs to the UvrC family. As to quaternary structure, interacts with UvrB in an incision complex.

It localises to the cytoplasm. Functionally, the UvrABC repair system catalyzes the recognition and processing of DNA lesions. UvrC both incises the 5' and 3' sides of the lesion. The N-terminal half is responsible for the 3' incision and the C-terminal half is responsible for the 5' incision. The polypeptide is UvrABC system protein C (Dictyoglomus thermophilum (strain ATCC 35947 / DSM 3960 / H-6-12)).